Here is a 375-residue protein sequence, read N- to C-terminus: MTEPQSVGTVAPQTAHFDEPLPLRSGGTLAGYDLVYETYGQLNAARSNAVLVCHALSGSHHVAGVYADDPRNVGWWDNLVGPGKPLDTRKFFVIGVNNLGGCYGSTGPGSVNPATGRPWGADFPFVTVEDWVDAQARLADRLGIQRFAAIVGGSLGGMQALSWTLQYPERVGHAAVIASAPKLTAQNIAFNEVARQAILTDPDFHGGHYYEHGVVPARGLKLARMVGHITYLSDDSMGEKFGRSLRHGKAVYSYDVEFEIESYLRYQGDKFAGYFDANTYLLTTKTLDYFDPAFEHGGNLNAALARASADFLVVSFTTDWRFSPARSREIVYALLHNRRNVSYAEIDCPAGHDSFLLDDPQYHALLSAWFDRIEV.

The AB hydrolase-1 domain maps to 48 to 358 (NAVLVCHALS…PAGHDSFLLD (311 aa)). Catalysis depends on Ser-154, which acts as the Nucleophile. Position 224 (Arg-224) interacts with substrate. Catalysis depends on residues Asp-319 and His-352. A substrate-binding site is contributed by Asp-353.

It belongs to the AB hydrolase superfamily. MetX family. Homodimer.

The protein resides in the cytoplasm. The catalysed reaction is L-homoserine + succinyl-CoA = O-succinyl-L-homoserine + CoA. Its pathway is amino-acid biosynthesis; L-methionine biosynthesis via de novo pathway; O-succinyl-L-homoserine from L-homoserine: step 1/1. Transfers a succinyl group from succinyl-CoA to L-homoserine, forming succinyl-L-homoserine. The polypeptide is Homoserine O-succinyltransferase (Azoarcus sp. (strain BH72)).